The chain runs to 510 residues: Citrate lyase alpha chain (510 aa).

In terms of assembly, oligomer with a subunit composition of (alpha,beta,gamma)6.

It is found in the cytoplasm. It carries out the reaction citrate = oxaloacetate + acetate. The enzyme catalyses citrate + acetyl-CoA = (3S)-citryl-CoA + acetate. Its function is as follows. Represents a citrate:acetyl-ACP transferase. This Escherichia coli (strain K12) protein is Citrate lyase alpha chain (citF).